Consider the following 431-residue polypeptide: Trigger factor (431 aa).

Residues threonine 165 to proline 250 form the PPIase FKBP-type domain.

This sequence belongs to the FKBP-type PPIase family. Tig subfamily.

The protein localises to the cytoplasm. It catalyses the reaction [protein]-peptidylproline (omega=180) = [protein]-peptidylproline (omega=0). Involved in protein export. Acts as a chaperone by maintaining the newly synthesized protein in an open conformation. Functions as a peptidyl-prolyl cis-trans isomerase. This Aster yellows witches'-broom phytoplasma (strain AYWB) protein is Trigger factor.